A 415-amino-acid chain; its full sequence is Nuclear hormone receptor family member nhr-153 (415 aa).

A DNA-binding region (nuclear receptor) is located at residues 26-105; it reads PSVCQICRNP…AGMNPMAIQA (80 aa). NR C4-type zinc fingers lie at residues 29–49 and 65–88; these read CQIC…CNGC and CFKV…CRAC. An NR LBD domain is found at 170–406; that stretch reads DQRDLSTALS…DPEVLKKKCI (237 aa).

Belongs to the nuclear hormone receptor family.

The protein resides in the nucleus. Orphan nuclear receptor. The chain is Nuclear hormone receptor family member nhr-153 (nhr-153) from Caenorhabditis elegans.